The primary structure comprises 212 residues: Probable GTP-binding protein EngB (212 aa).

The 173-residue stretch at 38–210 (ALPQIAFVGK…KTSLAKCIKL (173 aa)) folds into the EngB-type G domain. GTP-binding positions include 46–53 (GKSNVGKS), 73–77 (GRTRQ), 91–94 (DLPG), 158–161 (TKSD), and 189–191 (VSS). Ser-53 and Thr-75 together coordinate Mg(2+).

Belongs to the TRAFAC class TrmE-Era-EngA-EngB-Septin-like GTPase superfamily. EngB GTPase family. It depends on Mg(2+) as a cofactor.

Functionally, necessary for normal cell division and for the maintenance of normal septation. The sequence is that of Probable GTP-binding protein EngB from Rickettsia bellii (strain OSU 85-389).